The primary structure comprises 445 residues: UNC93-like protein MFSD11 (445 aa).

A helical transmembrane segment spans residues leucine 8 to serine 28. N-linked (GlcNAc...) asparagine glycosylation is present at asparagine 40. The next 4 helical transmembrane spans lie at leucine 52–valine 72, glycine 74–isoleucine 94, threonine 98–alanine 118, and isoleucine 138–tryptophan 158. An N-linked (GlcNAc...) asparagine glycan is attached at asparagine 163. The next 7 membrane-spanning stretches (helical) occupy residues arginine 170–isoleucine 190, methionine 239–valine 259, leucine 277–glycine 297, proline 309–methionine 329, leucine 343–leucine 363, alanine 385–tyrosine 405, and leucine 415–glycine 435.

It belongs to the unc-93 family.

The protein resides in the membrane. The chain is UNC93-like protein MFSD11 (mfsd11) from Xenopus laevis (African clawed frog).